The following is a 302-amino-acid chain: Acetyl-coenzyme A carboxylase carboxyl transferase subunit beta (302 aa).

Residues 25-294 enclose the CoA carboxyltransferase N-terminal domain; it reads VWTKCDSCGQ…PQEDIVTEAA (270 aa). The Zn(2+) site is built by cysteine 29, cysteine 32, cysteine 48, and cysteine 51. The segment at 29 to 51 adopts a C4-type zinc-finger fold; the sequence is CDSCGQVLYRAELERNLEVCPKC.

This sequence belongs to the AccD/PCCB family. Acetyl-CoA carboxylase is a heterohexamer composed of biotin carboxyl carrier protein (AccB), biotin carboxylase (AccC) and two subunits each of ACCase subunit alpha (AccA) and ACCase subunit beta (AccD). It depends on Zn(2+) as a cofactor.

It localises to the cytoplasm. The catalysed reaction is N(6)-carboxybiotinyl-L-lysyl-[protein] + acetyl-CoA = N(6)-biotinyl-L-lysyl-[protein] + malonyl-CoA. It participates in lipid metabolism; malonyl-CoA biosynthesis; malonyl-CoA from acetyl-CoA: step 1/1. Component of the acetyl coenzyme A carboxylase (ACC) complex. Biotin carboxylase (BC) catalyzes the carboxylation of biotin on its carrier protein (BCCP) and then the CO(2) group is transferred by the transcarboxylase to acetyl-CoA to form malonyl-CoA. This is Acetyl-coenzyme A carboxylase carboxyl transferase subunit beta from Erwinia tasmaniensis (strain DSM 17950 / CFBP 7177 / CIP 109463 / NCPPB 4357 / Et1/99).